The sequence spans 297 residues: F-actin-capping protein subunit beta (297 aa).

A compositionally biased stretch (basic and acidic residues) spans 276 to 289; the sequence is DLSGKESDDKRQSE. Positions 276–297 are disordered; sequence DLSGKESDDKRQSELVKGLQSL.

This sequence belongs to the F-actin-capping protein beta subunit family. In terms of assembly, component of the F-actin capping complex, composed of a heterodimer of an alpha and a beta subunit.

It localises to the cytoplasm. It is found in the cytoskeleton. The protein localises to the actin patch. In terms of biological role, F-actin-capping proteins bind in a Ca(2+)-independent manner to the fast growing ends of actin filaments (barbed end) thereby blocking the exchange of subunits at these ends. Unlike other capping proteins (such as gelsolin and severin), these proteins do not sever actin filaments. This is F-actin-capping protein subunit beta (CAP2) from Debaryomyces hansenii (strain ATCC 36239 / CBS 767 / BCRC 21394 / JCM 1990 / NBRC 0083 / IGC 2968) (Yeast).